Consider the following 320-residue polypeptide: MLRRKTQAETNRLNHHIIELLFRQTTRFFAIFVFLLLAAVMTSLVFGSWDSFSTFGFSFLWHNDWNPVQESYGAIIPIVGTLITSFLALIIAVPISFGIAIFLTELAPEWLRRPVGTAIEMLAAIPSIIYGMWGLFIFVPLFQEHIQPSLIEWFGDLPVFSYLFSGAPFGIGLFTAGLVLAIMIIPFIAAVMRDVFTIVPAILKESAYGLGSTTWEVMWKVVLPYTKTGVVGGIMLGLGRALGETMAVTFVIGNAFHLPESLFSPSTSIASAIANEFNEASGLQKSALMELGLILFLITTVVLSISRLLIMRIEKKEGRK.

Over 1–27 (MLRRKTQAETNRLNHHIIELLFRQTTR) the chain is Cytoplasmic. Residues 28-50 (FFAIFVFLLLAAVMTSLVFGSWD) traverse the membrane as a helical segment. Over 51-80 (SFSTFGFSFLWHNDWNPVQESYGAIIPIVG) the chain is Periplasmic. The 229-residue stretch at 78–306 (IVGTLITSFL…LITTVVLSIS (229 aa)) folds into the ABC transmembrane type-1 domain. The helical transmembrane segment at 81-103 (TLITSFLALIIAVPISFGIAIFL) threads the bilayer. Residues 104 to 114 (TELAPEWLRRP) are Cytoplasmic-facing. The chain crosses the membrane as a helical span at residues 115-137 (VGTAIEMLAAIPSIIYGMWGLFI). Residues 138 to 168 (FVPLFQEHIQPSLIEWFGDLPVFSYLFSGAP) are Periplasmic-facing. Residues 169 to 191 (FGIGLFTAGLVLAIMIIPFIAAV) form a helical membrane-spanning segment. Over 192–229 (MRDVFTIVPAILKESAYGLGSTTWEVMWKVVLPYTKTG) the chain is Cytoplasmic. The helical transmembrane segment at 230–252 (VVGGIMLGLGRALGETMAVTFVI) threads the bilayer. Residues 253–287 (GNAFHLPESLFSPSTSIASAIANEFNEASGLQKSA) lie on the Periplasmic side of the membrane. The chain crosses the membrane as a helical span at residues 288–310 (LMELGLILFLITTVVLSISRLLI). Over 311–320 (MRIEKKEGRK) the chain is Cytoplasmic.

This sequence belongs to the binding-protein-dependent transport system permease family. CysTW subfamily.

The protein localises to the cell inner membrane. Its function is as follows. Part of the binding-protein-dependent transport system for phosphate; probably responsible for the translocation of the substrate across the membrane. The protein is Phosphate transport system permease protein PstC (pstC) of Pasteurella multocida (strain Pm70).